The primary structure comprises 477 residues: Myc-associated zinc finger protein (477 aa).

2 disordered regions span residues 59–78 and 121–144; these read AQSP…APAA and TVDT…SAPA. Positions 130–140 are enriched in pro residues; sequence PPAPPPPPPAV. 4 consecutive C2H2-type zinc fingers follow at residues 190–212, 279–301, 307–329, and 337–360; these read YICA…EAIH, HACE…KLSH, YQCP…VRSH, and YNCS…RQVH. Serine 361 bears the Phosphoserine mark. The C2H2-type 5 zinc finger occupies 366 to 388; sequence FKCEKCEAAFATKDRLRAHTVRH. Residues 392-413 form a C2H2-type 6; atypical zinc finger; sequence VPCHVCGKMLSSAYISDHMKVH.

In terms of assembly, interacts with BPTF. Expressed in Purkinje cells in the brain (at protein level).

The protein resides in the nucleus. In terms of biological role, transcriptional regulator. Acts as a transcriptional activator that binds to purine-rich GAGA sites found in the promoter of many genes including insulin I and II and islet amyloid polypeptide. The sequence is that of Myc-associated zinc finger protein (Maz) from Mus musculus (Mouse).